The following is a 62-amino-acid chain: Short neurotoxin 1 (62 aa).

A disordered region spans residues leucine 1–glycine 20. Intrachain disulfides connect cysteine 3-cysteine 24, cysteine 17-cysteine 41, cysteine 43-cysteine 54, and cysteine 55-cysteine 60.

This sequence belongs to the three-finger toxin family. Short-chain subfamily. Type I alpha-neurotoxin sub-subfamily. Expressed by the venom gland.

The protein localises to the secreted. Its function is as follows. Binds to muscle nicotinic acetylcholine receptor (nAChR) and inhibit acetylcholine from binding to the receptor, thereby impairing neuromuscular transmission. The protein is Short neurotoxin 1 of Naja mossambica (Mozambique spitting cobra).